A 120-amino-acid chain; its full sequence is Immunogenic miracidial antigen 5D (120 aa).

The tract at residues 41 to 120 (HIDVGDEDYH…PKKYGSGYKH (80 aa)) is disordered. A compositionally biased stretch (acidic residues) spans 45 to 66 (GDEDYHDGDDDVDYTDDVDDVD).

Belongs to the immunogenic miracidial antigen family.

The polypeptide is Immunogenic miracidial antigen 5D (5D) (Schistosoma japonicum (Blood fluke)).